A 383-amino-acid chain; its full sequence is Galactokinase (383 aa).

34 to 37 is a binding site for substrate; the sequence is EHTD. An ATP-binding site is contributed by 124-130; sequence GAGLSSS. Positions 130 and 162 each coordinate Mg(2+). Asp174 functions as the Proton acceptor in the catalytic mechanism. Tyr223 provides a ligand contact to substrate.

This sequence belongs to the GHMP kinase family. GalK subfamily.

The protein resides in the cytoplasm. It carries out the reaction alpha-D-galactose + ATP = alpha-D-galactose 1-phosphate + ADP + H(+). The protein operates within carbohydrate metabolism; galactose metabolism. In terms of biological role, catalyzes the transfer of the gamma-phosphate of ATP to D-galactose to form alpha-D-galactose-1-phosphate (Gal-1-P). The sequence is that of Galactokinase from Yersinia pseudotuberculosis serotype O:1b (strain IP 31758).